The primary structure comprises 158 residues: SsrA-binding protein (158 aa).

This sequence belongs to the SmpB family.

Its subcellular location is the cytoplasm. Required for rescue of stalled ribosomes mediated by trans-translation. Binds to transfer-messenger RNA (tmRNA), required for stable association of tmRNA with ribosomes. tmRNA and SmpB together mimic tRNA shape, replacing the anticodon stem-loop with SmpB. tmRNA is encoded by the ssrA gene; the 2 termini fold to resemble tRNA(Ala) and it encodes a 'tag peptide', a short internal open reading frame. During trans-translation Ala-aminoacylated tmRNA acts like a tRNA, entering the A-site of stalled ribosomes, displacing the stalled mRNA. The ribosome then switches to translate the ORF on the tmRNA; the nascent peptide is terminated with the 'tag peptide' encoded by the tmRNA and targeted for degradation. The ribosome is freed to recommence translation, which seems to be the essential function of trans-translation. The protein is SsrA-binding protein of Glaesserella parasuis serovar 5 (strain SH0165) (Haemophilus parasuis).